Here is a 63-residue protein sequence, read N- to C-terminus: Rubredoxin-2 (63 aa).

Positions 8–59 (YKLFRCLQCGFEYDEAIGWPDDGIEPGTRWDEIPEDWSCPDCGAAKVDFEMV) constitute a Rubredoxin-like domain. The Fe cation site is built by Cys13, Cys16, Cys46, and Cys49.

The protein belongs to the rubredoxin family. Fe(3+) serves as cofactor.

Involved in the hydrocarbon hydroxylating system, which transfers electrons from NADH to rubredoxin reductase and then through rubredoxin to alkane 1 monooxygenase. The protein is Rubredoxin-2 (rubA2) of Rhodococcus erythropolis (Arthrobacter picolinophilus).